A 299-amino-acid polypeptide reads, in one-letter code: tRNA dimethylallyltransferase (299 aa).

Residue 11 to 18 (GPTAVGKT) participates in ATP binding. Position 13–18 (13–18 (TAVGKT)) interacts with substrate. Residues 36–39 (DSQQ) are interaction with substrate tRNA.

It belongs to the IPP transferase family. As to quaternary structure, monomer. Mg(2+) is required as a cofactor.

It catalyses the reaction adenosine(37) in tRNA + dimethylallyl diphosphate = N(6)-dimethylallyladenosine(37) in tRNA + diphosphate. Its function is as follows. Catalyzes the transfer of a dimethylallyl group onto the adenine at position 37 in tRNAs that read codons beginning with uridine, leading to the formation of N6-(dimethylallyl)adenosine (i(6)A). This Streptococcus pyogenes serotype M12 (strain MGAS2096) protein is tRNA dimethylallyltransferase.